A 133-amino-acid chain; its full sequence is Large ribosomal subunit protein bL17 (133 aa).

The protein belongs to the bacterial ribosomal protein bL17 family. In terms of assembly, part of the 50S ribosomal subunit. Contacts protein L32.

The chain is Large ribosomal subunit protein bL17 from Pseudoalteromonas translucida (strain TAC 125).